Consider the following 1099-residue polypeptide: Probable inorganic carbon transporter subunit DabA (1099 aa).

The tract at residues 175–194 is disordered; it reads RQGRRRFATTERRTRRTRRS. The span at 176-194 shows a compositional bias: basic residues; it reads QGRRRFATTERRTRRTRRS. The Zn(2+) site is built by Cys514, Asp516, His722, and Cys737. The segment at 1071–1099 is disordered; the sequence is AGAGAAQPTRDAIELPEQASGPLPARDGQ.

Belongs to the inorganic carbon transporter (TC 9.A.2) DabA family. As to quaternary structure, forms a complex with DabB. Zn(2+) is required as a cofactor.

Its subcellular location is the cell membrane. Its function is as follows. Part of an energy-coupled inorganic carbon pump. The sequence is that of Probable inorganic carbon transporter subunit DabA from Parafrankia sp. (strain EAN1pec).